A 279-amino-acid polypeptide reads, in one-letter code: Nitrate import permease protein NrtB (279 aa).

The next 5 membrane-spanning stretches (helical) occupy residues 25–45 (FLPYVVCLPIFLAIWQVISAI), 91–111 (VAIGYLLAACTGILVGGVLGM), 149–169 (AIFVIFITAIWPIIINTAVGI), 200–220 (VPYVFAGLRIAVGLAWLAIVA), and 249–269 (IILAIFYVGLVGLSLDRLVAW). One can recognise an ABC transmembrane type-1 domain in the interval 84 to 267 (ILISLQRVAI…LVGLSLDRLV (184 aa)).

The protein belongs to the binding-protein-dependent transport system permease family. CysTW subfamily. As to quaternary structure, the complex is composed of two ATP-binding proteins (NrtC and NrtD), two transmembrane proteins (NrtB) and a solute-binding protein (NrtA).

The protein localises to the cell inner membrane. Part of the ABC transporter complex NrtABCD involved in nitrate uptake. The complex is probably also involved in nitrite transport. Probably responsible for the translocation of the substrate across the membrane. The protein is Nitrate import permease protein NrtB of Synechococcus elongatus (strain ATCC 33912 / PCC 7942 / FACHB-805) (Anacystis nidulans R2).